We begin with the raw amino-acid sequence, 117 residues long: Large ribosomal subunit protein bL20 (117 aa).

The protein belongs to the bacterial ribosomal protein bL20 family.

In terms of biological role, binds directly to 23S ribosomal RNA and is necessary for the in vitro assembly process of the 50S ribosomal subunit. It is not involved in the protein synthesizing functions of that subunit. The polypeptide is Large ribosomal subunit protein bL20 (Rippkaea orientalis (strain PCC 8801 / RF-1) (Cyanothece sp. (strain PCC 8801))).